Here is a 328-residue protein sequence, read N- to C-terminus: Reticulocalbin-3 (328 aa).

The N-terminal stretch at Met1 to Gly20 is a signal peptide. Positions Pro24–Ala48 are disordered. 6 consecutive EF-hand domains span residues Glu75–Arg112, His113–Pro148, Lys163–Pro198, Met200–Gly235, Trp241–Asp276, and Gln277–Ser312. Residues Asp92, Asp94, Trp96, Glu101, Asp126, Asp128, Asp130, Arg132, and Glu137 each coordinate Ca(2+). An N-linked (GlcNAc...) asparagine glycan is attached at Asn140. 20 residues coordinate Ca(2+): Asp176, Asp178, Asp180, Met182, Glu187, Asp213, Asn215, Asp217, Tyr219, Glu224, Asp254, Asn256, Asp258, Arg260, Glu265, Asp290, Asp292, Asp294, Arg296, and Glu301. Positions His325–Leu328 match the Prevents secretion from ER motif.

It belongs to the CREC family. Interacts with PCSK6 (immature form including the propeptide); probably involved in the maturation and the secretion of PCSK6. N-glycosylated. Post-translationally, degraded by PCSK6 and other endoproteases including FURIN and PCSK5.

The protein localises to the endoplasmic reticulum lumen. In terms of biological role, probable molecular chaperone assisting protein biosynthesis and transport in the endoplasmic reticulum. Required for the proper biosynthesis and transport of pulmonary surfactant-associated protein A/SP-A, pulmonary surfactant-associated protein D/SP-D and the lipid transporter ABCA3. By regulating both the proper expression and the degradation through the endoplasmic reticulum-associated protein degradation pathway of these proteins plays a crucial role in pulmonary surfactant homeostasis. Has an anti-fibrotic activity by negatively regulating the secretion of type I and type III collagens. This calcium-binding protein also transiently associates with immature PCSK6 and regulates its secretion. This Rattus norvegicus (Rat) protein is Reticulocalbin-3.